We begin with the raw amino-acid sequence, 237 residues long: Trypsin-1 (237 aa).

The 237-residue stretch at 1–237 folds into the Peptidase S1 domain; sequence IVGGTDAVLG…HVDWIKANAV (237 aa). Residues cysteine 30 and cysteine 46 are joined by a disulfide bond. Histidine 45 serves as the catalytic Charge relay system. Ca(2+) is bound by residues glutamate 64, valine 69, and glutamate 74. Catalysis depends on aspartate 96, which acts as the Charge relay system. Intrachain disulfides connect cysteine 159-cysteine 174 and cysteine 185-cysteine 213. Serine 189 acts as the Charge relay system in catalysis.

It belongs to the peptidase S1 family. Ca(2+) serves as cofactor.

The protein localises to the secreted. It is found in the extracellular space. The enzyme catalyses Preferential cleavage: Arg-|-Xaa, Lys-|-Xaa.. The polypeptide is Trypsin-1 (Astacus astacus (Noble crayfish)).